Reading from the N-terminus, the 162-residue chain is D-aminoacyl-tRNA deacylase (162 aa).

The Gly-cisPro motif, important for rejection of L-amino acids signature appears at 145-146 (GP).

Belongs to the DTD family. As to quaternary structure, homodimer.

It localises to the cytoplasm. It catalyses the reaction glycyl-tRNA(Ala) + H2O = tRNA(Ala) + glycine + H(+). It carries out the reaction a D-aminoacyl-tRNA + H2O = a tRNA + a D-alpha-amino acid + H(+). In terms of biological role, an aminoacyl-tRNA editing enzyme that deacylates mischarged D-aminoacyl-tRNAs. Also deacylates mischarged glycyl-tRNA(Ala), protecting cells against glycine mischarging by AlaRS. Acts via tRNA-based rather than protein-based catalysis; rejects L-amino acids rather than detecting D-amino acids in the active site. By recycling D-aminoacyl-tRNA to D-amino acids and free tRNA molecules, this enzyme counteracts the toxicity associated with the formation of D-aminoacyl-tRNA entities in vivo and helps enforce protein L-homochirality. In Bifidobacterium longum (strain NCC 2705), this protein is D-aminoacyl-tRNA deacylase.